We begin with the raw amino-acid sequence, 158 residues long: MQGRLSAWLVKHGLVHRSLGFDYQGIETLQIKPEDWHSVAVILYIYGYNYLRSQCAYDVAPGGLLASVYHLTRIEYGVDQPEEVCIKVFAPRSNPKIPSVFWVWKSANFQERESYDMLGILYDNHPRLKRILMPESWIGWPLRKDYIAPNFYEIQDAY.

Belongs to the complex I 30 kDa subunit family. As to quaternary structure, NDH is composed of at least 16 different subunits, 5 of which are encoded in the nucleus.

Its subcellular location is the plastid. The protein localises to the chloroplast thylakoid membrane. The catalysed reaction is a plastoquinone + NADH + (n+1) H(+)(in) = a plastoquinol + NAD(+) + n H(+)(out). The enzyme catalyses a plastoquinone + NADPH + (n+1) H(+)(in) = a plastoquinol + NADP(+) + n H(+)(out). Its function is as follows. NDH shuttles electrons from NAD(P)H:plastoquinone, via FMN and iron-sulfur (Fe-S) centers, to quinones in the photosynthetic chain and possibly in a chloroplast respiratory chain. The immediate electron acceptor for the enzyme in this species is believed to be plastoquinone. Couples the redox reaction to proton translocation, and thus conserves the redox energy in a proton gradient. This chain is NAD(P)H-quinone oxidoreductase subunit J, chloroplastic, found in Citrus sinensis (Sweet orange).